The sequence spans 500 residues: L-arabinose isomerase (500 aa).

Residues Glu306, Glu333, His349, and His448 each coordinate Mn(2+).

Belongs to the arabinose isomerase family. Mn(2+) is required as a cofactor.

The enzyme catalyses beta-L-arabinopyranose = L-ribulose. The protein operates within carbohydrate degradation; L-arabinose degradation via L-ribulose; D-xylulose 5-phosphate from L-arabinose (bacterial route): step 1/3. Functionally, catalyzes the conversion of L-arabinose to L-ribulose. The chain is L-arabinose isomerase from Saccharophagus degradans (strain 2-40 / ATCC 43961 / DSM 17024).